Consider the following 709-residue polypeptide: Elongation factor G (709 aa).

Residues 9–295 enclose the tr-type G domain; that stretch reads AKVRNIGIMA…AVVRYLPTPL (287 aa). Residues 18–25, 86–90, and 140–143 contribute to the GTP site; these read AHIDAGKT, DTPGH, and NKLD.

It belongs to the TRAFAC class translation factor GTPase superfamily. Classic translation factor GTPase family. EF-G/EF-2 subfamily.

The protein localises to the cytoplasm. Catalyzes the GTP-dependent ribosomal translocation step during translation elongation. During this step, the ribosome changes from the pre-translocational (PRE) to the post-translocational (POST) state as the newly formed A-site-bound peptidyl-tRNA and P-site-bound deacylated tRNA move to the P and E sites, respectively. Catalyzes the coordinated movement of the two tRNA molecules, the mRNA and conformational changes in the ribosome. This Streptomyces avermitilis (strain ATCC 31267 / DSM 46492 / JCM 5070 / NBRC 14893 / NCIMB 12804 / NRRL 8165 / MA-4680) protein is Elongation factor G.